The following is a 413-amino-acid chain: uncharacterized protein (413 aa).

This is an uncharacterized protein from Bacillus subtilis (strain 168).